A 258-amino-acid polypeptide reads, in one-letter code: Neurotrophin-3 (258 aa).

An N-terminal signal peptide occupies residues 1-18; the sequence is MSILFYVIFLAYLRGIQG. A propeptide spanning residues 19 to 139 is cleaved from the precursor; that stretch reads NNMDQRSLPE…TNRTSPRRKR (121 aa). A disordered region spans residues 60–85; it reads QSTLPKAEAPREPEQGEATRSEFQPM. Residues 67 to 79 are compositionally biased toward basic and acidic residues; it reads EAPREPEQGEATR. Asn-131 is a glycosylation site (N-linked (GlcNAc...) asparagine). 3 disulfide bridges follow: Cys-153–Cys-218, Cys-196–Cys-247, and Cys-206–Cys-249.

It belongs to the NGF-beta family. As to expression, brain and peripheral tissues.

It localises to the secreted. Functionally, seems to promote the survival of visceral and proprioceptive sensory neurons. The polypeptide is Neurotrophin-3 (Ntf3) (Rattus norvegicus (Rat)).